Here is a 709-residue protein sequence, read N- to C-terminus: Polyribonucleotide nucleotidyltransferase (709 aa).

Mg(2+)-binding residues include Asp485 and Asp491. Residues 552 to 611 form the KH domain; sequence PRIHTMKIDPKKIKDVIGKGGATIRALTEETGTSIDIDDDGTVKIAATDNNAAKRVMERI. One can recognise an S1 motif domain in the interval 621-689; it reads NAIYKGKVTR…RQGRIRLTMK (69 aa).

Belongs to the polyribonucleotide nucleotidyltransferase family. As to quaternary structure, component of the RNA degradosome, which is a multiprotein complex involved in RNA processing and mRNA degradation. The cofactor is Mg(2+).

The protein resides in the cytoplasm. The enzyme catalyses RNA(n+1) + phosphate = RNA(n) + a ribonucleoside 5'-diphosphate. Involved in mRNA degradation. Catalyzes the phosphorolysis of single-stranded polyribonucleotides processively in the 3'- to 5'-direction. In Glaesserella parasuis serovar 5 (strain SH0165) (Haemophilus parasuis), this protein is Polyribonucleotide nucleotidyltransferase.